A 378-amino-acid polypeptide reads, in one-letter code: Cytochrome b (378 aa).

Transmembrane regions (helical) follow at residues 34-54, 78-99, 114-134, and 179-199; these read FGSLLFLCLMIQILTGLFLAM, WLLRTMHANGASFFFICIYLHV, WLVGVIILFLVMGTAFMGYVL, and FFTFHFILPFIVLAATLIHIL. Heme b is bound by residues H84 and H98. Positions 183 and 197 each coordinate heme b. H202 lines the a ubiquinone pocket. Transmembrane regions (helical) follow at residues 227-247, 289-309, 321-341, and 348-368; these read FKDIVGFIMMTMILILLVLIN, LGGVIALVLSIAILAILPFYH, INQILFWIMVVTVILLTWIGA, and YVLVGQILTVIYFSYFMFNPL.

Belongs to the cytochrome b family. In terms of assembly, the main subunits of complex b-c1 are: cytochrome b, cytochrome c1 and the Rieske protein. The cofactor is heme b.

The protein localises to the mitochondrion inner membrane. Its function is as follows. Component of the ubiquinol-cytochrome c reductase complex (complex III or cytochrome b-c1 complex) that is part of the mitochondrial respiratory chain. The b-c1 complex mediates electron transfer from ubiquinol to cytochrome c. Contributes to the generation of a proton gradient across the mitochondrial membrane that is then used for ATP synthesis. This is Cytochrome b (MT-CYB) from Cochliomyia hominivorax (Primary screw-worm).